Consider the following 155-residue polypeptide: MRRRKAPVREVLGDPVYGNKVVTKFINKMMFDGKKSVAEKIIYKAFNKIEEKSGEKGIEVFEKALERVRPLVEVRSRRVGGATYQVPVEVRASRQQSLSIRWILEATRKRNERMMVDRLANELMDAASDKGAAFKKKEDVHKMAEANKAFAHYRW.

This sequence belongs to the universal ribosomal protein uS7 family. As to quaternary structure, part of the 30S ribosomal subunit. Contacts proteins S9 and S11.

In terms of biological role, one of the primary rRNA binding proteins, it binds directly to 16S rRNA where it nucleates assembly of the head domain of the 30S subunit. Is located at the subunit interface close to the decoding center, probably blocks exit of the E-site tRNA. The polypeptide is Small ribosomal subunit protein uS7 (Helicobacter acinonychis (strain Sheeba)).